A 92-amino-acid polypeptide reads, in one-letter code: Mediator-associated protein 3 (92 aa).

Positions 13–70 (KDLRRKIKKTVKKILESSNLYKITEIKAREEASLKLDLDLSQDPYKVIVKEEVENFLE) constitute a DEK-C domain.

In terms of assembly, associated with the Mediator complex.

The protein resides in the nucleus. This Arabidopsis thaliana (Mouse-ear cress) protein is Mediator-associated protein 3.